A 741-amino-acid polypeptide reads, in one-letter code: Transketolase, chloroplastic (741 aa).

Residues 1–19 (MAASSSLSTLSHHQTLLSH) are compositionally biased toward low complexity. The interval 1-33 (MAASSSLSTLSHHQTLLSHPKTHLPTTPASSLL) is disordered. The transit peptide at 1–66 (MAASSSLSTL…VGSASAVVRA (66 aa)) directs the protein to the chloroplast. The span at 24–33 (LPTTPASSLL) shows a compositional bias: polar residues. His103 lines the substrate pocket. Residues His143 and 192 to 194 (GPL) each bind thiamine diphosphate. Asp233 serves as a coordination point for Mg(2+). The thiamine diphosphate site is built by Gly234 and Asn263. Residues Asn263 and Ile265 each contribute to the Mg(2+) site. Residues His340, Arg434, and Ser461 each coordinate substrate. Residue His340 participates in thiamine diphosphate binding. Residues Glu488 and Phe515 each coordinate thiamine diphosphate. Glu488 serves as the catalytic Proton donor. The substrate site is built by His539, Asp547, and Arg598.

This sequence belongs to the transketolase family. In terms of assembly, homodimer. Mg(2+) is required as a cofactor. The cofactor is Ca(2+). It depends on Mn(2+) as a cofactor. Requires Co(2+) as cofactor. Thiamine diphosphate serves as cofactor.

Its subcellular location is the plastid. The protein localises to the chloroplast thylakoid membrane. The enzyme catalyses D-sedoheptulose 7-phosphate + D-glyceraldehyde 3-phosphate = aldehydo-D-ribose 5-phosphate + D-xylulose 5-phosphate. The protein operates within carbohydrate biosynthesis; Calvin cycle. Its function is as follows. Catalyzes the reversible transfer of a two-carbon ketol group from fructose-6-phosphate or sedoheptulose-7-phosphate to glyceraldehyde-3-phosphate to yield xylulose-5-phosphate and erythrose-4-phosphate or ribose-5-phosphate, respectively. The polypeptide is Transketolase, chloroplastic (Spinacia oleracea (Spinach)).